The sequence spans 41 residues: Photosystem I reaction center subunit IX (41 aa).

Residues Tyr7–Ile27 traverse the membrane as a helical segment.

Belongs to the PsaJ family.

It localises to the cellular thylakoid membrane. Its function is as follows. May help in the organization of the PsaE and PsaF subunits. The chain is Photosystem I reaction center subunit IX from Synechococcus sp. (strain ATCC 27144 / PCC 6301 / SAUG 1402/1) (Anacystis nidulans).